We begin with the raw amino-acid sequence, 52 residues long: Large ribosomal subunit protein bL33 (52 aa).

The protein belongs to the bacterial ribosomal protein bL33 family.

This Chlamydia trachomatis serovar L2 (strain ATCC VR-902B / DSM 19102 / 434/Bu) protein is Large ribosomal subunit protein bL33.